A 371-amino-acid chain; its full sequence is Chaperone protein DnaJ (371 aa).

Residues 5 to 70 form the J domain; it reads CYYEILNISK…SKRSRYDQFG (66 aa). Residues 127–204 form a CR-type zinc finger; it reads GVEKEITIPR…CYGNGKVKKQ (78 aa). Zn(2+) contacts are provided by Cys140, Cys143, Cys156, Cys159, Cys178, Cys181, Cys192, and Cys195. CXXCXGXG motif repeat units follow at residues 140 to 147, 156 to 163, 178 to 185, and 192 to 199; these read CDSCDGTG, CHACHGQG, CPVCNGTG, and CDACYGNG.

This sequence belongs to the DnaJ family. As to quaternary structure, homodimer. It depends on Zn(2+) as a cofactor.

It localises to the cytoplasm. Functionally, participates actively in the response to hyperosmotic and heat shock by preventing the aggregation of stress-denatured proteins and by disaggregating proteins, also in an autonomous, DnaK-independent fashion. Unfolded proteins bind initially to DnaJ; upon interaction with the DnaJ-bound protein, DnaK hydrolyzes its bound ATP, resulting in the formation of a stable complex. GrpE releases ADP from DnaK; ATP binding to DnaK triggers the release of the substrate protein, thus completing the reaction cycle. Several rounds of ATP-dependent interactions between DnaJ, DnaK and GrpE are required for fully efficient folding. Also involved, together with DnaK and GrpE, in the DNA replication of plasmids through activation of initiation proteins. In Francisella tularensis subsp. holarctica (strain LVS), this protein is Chaperone protein DnaJ.